An 81-amino-acid polypeptide reads, in one-letter code: Exodeoxyribonuclease 7 small subunit (81 aa).

Residues 61–81 are disordered; sequence MNDSDQEVAFETPQGGTGDAD.

It belongs to the XseB family. In terms of assembly, heterooligomer composed of large and small subunits.

It localises to the cytoplasm. The enzyme catalyses Exonucleolytic cleavage in either 5'- to 3'- or 3'- to 5'-direction to yield nucleoside 5'-phosphates.. In terms of biological role, bidirectionally degrades single-stranded DNA into large acid-insoluble oligonucleotides, which are then degraded further into small acid-soluble oligonucleotides. The chain is Exodeoxyribonuclease 7 small subunit from Levilactobacillus brevis (strain ATCC 367 / BCRC 12310 / CIP 105137 / JCM 1170 / LMG 11437 / NCIMB 947 / NCTC 947) (Lactobacillus brevis).